A 241-amino-acid chain; its full sequence is Endothelial protein C receptor (241 aa).

The signal sequence occupies residues 1–17; that stretch reads MLTTLLPLLPLLLPGWA. Residues 18 to 212 are Extracellular-facing; sequence LCSQEASDGP…GSQTGRSYTS (195 aa). N-linked (GlcNAc...) asparagine glycosylation is found at N49, N66, N138, and N174. Intrachain disulfides connect C120–C188 and C221–C234. The helical transmembrane segment at 213–233 threads the bilayer; sequence LVLGVLVGCFIVTGVAVGIFL. The Cytoplasmic portion of the chain corresponds to 234-241; it reads CTGGRRRC.

Expressed in endothelial cells.

The protein localises to the membrane. In terms of biological role, binds activated protein C. Enhances protein C activation by the thrombin-thrombomodulin complex; plays a role in the protein C pathway controlling blood coagulation. The polypeptide is Endothelial protein C receptor (PROCR) (Bos taurus (Bovine)).